Here is a 330-residue protein sequence, read N- to C-terminus: D-lactate dehydrogenase (330 aa).

NAD(+) is bound by residues 156–157 (RI), Asp176, 206–207 (VP), 233–235 (AAR), and Asp259. Arg235 is a catalytic residue. Glu264 is a catalytic residue. His296 acts as the Proton donor in catalysis.

This sequence belongs to the D-isomer specific 2-hydroxyacid dehydrogenase family.

It carries out the reaction (R)-lactate + NAD(+) = pyruvate + NADH + H(+). The protein is D-lactate dehydrogenase (ldhD) of Staphylococcus aureus (strain Mu50 / ATCC 700699).